The primary structure comprises 319 residues: Ribose-phosphate pyrophosphokinase (319 aa).

Residues 40–42 (DGE) and 99–100 (RQ) each bind ATP. H134 and D174 together coordinate Mg(2+). K198 is a catalytic residue. D-ribose 5-phosphate is bound by residues R200, D224, and 228 to 232 (DTAGT).

The protein belongs to the ribose-phosphate pyrophosphokinase family. Class I subfamily. As to quaternary structure, homohexamer. Mg(2+) is required as a cofactor.

Its subcellular location is the cytoplasm. It carries out the reaction D-ribose 5-phosphate + ATP = 5-phospho-alpha-D-ribose 1-diphosphate + AMP + H(+). It functions in the pathway metabolic intermediate biosynthesis; 5-phospho-alpha-D-ribose 1-diphosphate biosynthesis; 5-phospho-alpha-D-ribose 1-diphosphate from D-ribose 5-phosphate (route I): step 1/1. Involved in the biosynthesis of the central metabolite phospho-alpha-D-ribosyl-1-pyrophosphate (PRPP) via the transfer of pyrophosphoryl group from ATP to 1-hydroxyl of ribose-5-phosphate (Rib-5-P). The chain is Ribose-phosphate pyrophosphokinase from Xanthomonas axonopodis pv. citri (strain 306).